Here is a 122-residue protein sequence, read N- to C-terminus: NADH-quinone oxidoreductase subunit A (122 aa).

Helical transmembrane passes span 10–30 (LIVF…LTIG), 67–87 (FALL…WAVV), and 91–111 (LGLF…IGLI).

Belongs to the complex I subunit 3 family. In terms of assembly, NDH-1 is composed of 14 different subunits. Subunits NuoA, H, J, K, L, M, N constitute the membrane sector of the complex.

It localises to the cell membrane. The catalysed reaction is a quinone + NADH + 5 H(+)(in) = a quinol + NAD(+) + 4 H(+)(out). In terms of biological role, NDH-1 shuttles electrons from NADH, via FMN and iron-sulfur (Fe-S) centers, to quinones in the respiratory chain. The immediate electron acceptor for the enzyme in this species is believed to be a menaquinone. Couples the redox reaction to proton translocation (for every two electrons transferred, four hydrogen ions are translocated across the cytoplasmic membrane), and thus conserves the redox energy in a proton gradient. This Geobacillus thermodenitrificans (strain NG80-2) protein is NADH-quinone oxidoreductase subunit A.